Here is a 494-residue protein sequence, read N- to C-terminus: NADH-quinone oxidoreductase subunit N (494 aa).

The next 14 membrane-spanning stretches (helical) occupy residues 13-33, 43-63, 82-102, 117-137, 138-158, 169-189, 209-229, 243-263, 277-297, 311-331, 332-352, 380-400, 412-432, and 461-481; these read LIAL…MLAI, FVLT…AMGV, MALV…YLGG, LLIL…HLVG, LFIG…YAFF, YMVL…LLYA, LLVE…LSLV, PAPV…AVLL, LNEL…LLAL, IAHF…AVEA, IGVY…VITL, AVLT…GFIG, QLWW…FYYL, and IMLL…QPLL.

This sequence belongs to the complex I subunit 2 family. In terms of assembly, NDH-1 is composed of 13 different subunits. Subunits NuoA, H, J, K, L, M, N constitute the membrane sector of the complex.

The protein resides in the cell inner membrane. It catalyses the reaction a quinone + NADH + 5 H(+)(in) = a quinol + NAD(+) + 4 H(+)(out). Functionally, NDH-1 shuttles electrons from NADH, via FMN and iron-sulfur (Fe-S) centers, to quinones in the respiratory chain. The immediate electron acceptor for the enzyme in this species is believed to be ubiquinone. Couples the redox reaction to proton translocation (for every two electrons transferred, four hydrogen ions are translocated across the cytoplasmic membrane), and thus conserves the redox energy in a proton gradient. This Ectopseudomonas mendocina (strain ymp) (Pseudomonas mendocina) protein is NADH-quinone oxidoreductase subunit N.